A 455-amino-acid chain; its full sequence is MSIVTVQLGQCGNQIGFEVFDALFRDSHCSQGLCSKRDNEAYQASCRERFFREEENGVPVARAVLVDMEPKVINQTLSKAAQSGRWNYGQHTSFCQKQGSGNNWAYGYSVHGPKHEESIMNLIQTEVEKCDSLSGFFIIMSMAGGTGSGLGAFVTQKLQDQYSSSLKMNQIIWPYGTGEVIVQNYNSILTLSHLYRSSDALLIHENDAVHKICAKRMNIKQISFRDLNQVLAHQLGSVFQPTYSEDSSFHYRRNPLGDLMEHLVPHPEFKMLGVRNIPQMSAASLAYSAFTWAGLLKHLRQMLISSAKMEEGINWQVRPPLTGLPPIGKASAHKEHHFNTSLANLVVLRGREVHSADVEGFKDPALYTSWLEPVDAFSVWKTQRAFDKYEKSAALVSNSQLLVKPLDMIVGKAWNMFSSKAFIHQYTKFGMEEEDFLDSFALLEQVVASYGSLGP.

Residue Ala-143–Gly-149 coordinates GTP.

This sequence belongs to the tubulin family. Found in a complex with TEDC1, TEDC2, TUBE1 and TUBD1. Highly expressed in testis.

It is found in the cell projection. The protein localises to the cilium. The protein resides in the cytoplasm. It localises to the cytoskeleton. Its subcellular location is the microtubule organizing center. It is found in the centrosome. The protein localises to the centriole. The protein resides in the nucleus. Functionally, acts as a positive regulator of hedgehog signaling and regulates ciliary function. The protein is Tubulin delta chain (Tubd1) of Mus musculus (Mouse).